Consider the following 251-residue polypeptide: Flagellar brake protein YcgR (251 aa).

Residues 127–239 (QRRDGFRVRP…ASRTLQRYID (113 aa)) enclose the PilZ domain.

This sequence belongs to the YcgR family. In terms of assembly, monomer. Interacts with the flagellar basal bodies.

It is found in the bacterial flagellum basal body. In terms of biological role, acts as a flagellar brake, regulating swimming and swarming in a bis-(3'-5') cyclic diguanylic acid (c-di-GMP)-dependent manner. Binds 1 c-di-GMP dimer per subunit. Increasing levels of c-di-GMP lead to decreased motility. This chain is Flagellar brake protein YcgR, found in Leptothrix cholodnii (strain ATCC 51168 / LMG 8142 / SP-6) (Leptothrix discophora (strain SP-6)).